Consider the following 452-residue polypeptide: UPF0210 protein Daud_1353 (452 aa).

This sequence belongs to the UPF0210 family. As to quaternary structure, homodimer.

This is UPF0210 protein Daud_1353 from Desulforudis audaxviator (strain MP104C).